The sequence spans 232 residues: Large ribosomal subunit protein uL1 (232 aa).

The protein belongs to the universal ribosomal protein uL1 family. Part of the 50S ribosomal subunit.

In terms of biological role, binds directly to 23S rRNA. The L1 stalk is quite mobile in the ribosome, and is involved in E site tRNA release. Its function is as follows. Protein L1 is also a translational repressor protein, it controls the translation of the L11 operon by binding to its mRNA. This Bartonella quintana (strain Toulouse) (Rochalimaea quintana) protein is Large ribosomal subunit protein uL1.